The following is a 152-amino-acid chain: Ribosome maturation factor RimP (152 aa).

Belongs to the RimP family.

The protein resides in the cytoplasm. In terms of biological role, required for maturation of 30S ribosomal subunits. This Pseudomonas aeruginosa (strain LESB58) protein is Ribosome maturation factor RimP.